Here is a 203-residue protein sequence, read N- to C-terminus: Glycerol-3-phosphate acyltransferase (203 aa).

The next 4 helical transmembrane spans lie at 6-26 (LTLL…AVLV), 82-102 (AISL…PIFF), 118-138 (APIG…LLLI), and 141-161 (YSSL…WWLD).

This sequence belongs to the PlsY family. In terms of assembly, probably interacts with PlsX.

The protein localises to the cell inner membrane. The catalysed reaction is an acyl phosphate + sn-glycerol 3-phosphate = a 1-acyl-sn-glycero-3-phosphate + phosphate. The protein operates within lipid metabolism; phospholipid metabolism. Its function is as follows. Catalyzes the transfer of an acyl group from acyl-phosphate (acyl-PO(4)) to glycerol-3-phosphate (G3P) to form lysophosphatidic acid (LPA). This enzyme utilizes acyl-phosphate as fatty acyl donor, but not acyl-CoA or acyl-ACP. In Shewanella putrefaciens (strain CN-32 / ATCC BAA-453), this protein is Glycerol-3-phosphate acyltransferase.